Here is an 86-residue protein sequence, read N- to C-terminus: Photosystem I reaction center subunit PsaK (86 aa).

The chain crosses the membrane as a helical span at residues 15 to 34 (PWSTQVAMVMITCNLLAIVA).

The protein belongs to the PsaG/PsaK family.

The protein localises to the plastid. It is found in the chloroplast thylakoid membrane. This is Photosystem I reaction center subunit PsaK from Pyropia yezoensis (Susabi-nori).